A 308-amino-acid chain; its full sequence is SAP30-binding protein (308 aa).

A disordered region spans residues 15–101 (AEDSEPESDG…EAEKRDPQEL (87 aa)). The span at 16–26 (EDSEPESDGEA) shows a compositional bias: acidic residues. 4 positions are modified to phosphoserine: S18, S22, S43, and S52. Residues 57–78 (DEDGYEEEEDENSRQSEDDDSE) show a composition bias toward acidic residues. Residues 79–99 (TEKPEADDPKDNTEAEKRDPQ) are compositionally biased toward basic and acidic residues. K95 participates in a covalent cross-link: Glycyl lysine isopeptide (Lys-Gly) (interchain with G-Cter in SUMO2). S113 carries the post-translational modification Phosphoserine. Glycyl lysine isopeptide (Lys-Gly) (interchain with G-Cter in SUMO2) cross-links involve residues K220, K304, and K305.

Belongs to the HCNGP family. In terms of assembly, interacts with histone deacetylase complex subunit SAP30.

The protein resides in the nucleus. Functionally, plays a role in transcriptional repression by promoting histone deacetylase activity, leading to deacetylation of histone H3. May be involved in the regulation of beta-2-microglobulin genes. In terms of biological role, (Microbial infection) Involved in transcriptional repression of HHV-1 genes TK and gC. This is SAP30-binding protein from Homo sapiens (Human).